The chain runs to 358 residues: GTPase Obg (358 aa).

In terms of domain architecture, Obg spans 1-158; that stretch reads MFVDNVDIYV…RHVRLELKLI (158 aa). Residues 159–355 enclose the OBG-type G domain; that stretch reads ADVGLVGFPN…LKYLLHESVR (197 aa). GTP-binding positions include 165-172, 190-194, 212-215, 280-283, and 336-338; these read GFPNVGKS, FTTLI, DIPG, SKVD, and SSA. Mg(2+) contacts are provided by Ser-172 and Thr-192.

It belongs to the TRAFAC class OBG-HflX-like GTPase superfamily. OBG GTPase family. In terms of assembly, monomer. The cofactor is Mg(2+).

The protein resides in the cytoplasm. Its function is as follows. An essential GTPase which binds GTP, GDP and possibly (p)ppGpp with moderate affinity, with high nucleotide exchange rates and a fairly low GTP hydrolysis rate. Plays a role in control of the cell cycle, stress response, ribosome biogenesis and in those bacteria that undergo differentiation, in morphogenesis control. The polypeptide is GTPase Obg (Wolinella succinogenes (strain ATCC 29543 / DSM 1740 / CCUG 13145 / JCM 31913 / LMG 7466 / NCTC 11488 / FDC 602W) (Vibrio succinogenes)).